A 283-amino-acid chain; its full sequence is uncharacterized protein (283 aa).

5 helical membrane passes run 8–28, 38–58, 73–93, 100–120, and 175–195; these read LILSIVGNILLGLIKIIIGYV, GIHSLSDVITSIIGIIGVKIA, FECLFSFFIGLALFFTAYEIG, IIYGEVIEVNAIMVGVAILSI, and AIAGIIVALMIAKVAFDICLT.

The protein belongs to the cation diffusion facilitator (CDF) transporter (TC 2.A.4) family.

The protein localises to the cell membrane. This is an uncharacterized protein from Methanocaldococcus jannaschii (strain ATCC 43067 / DSM 2661 / JAL-1 / JCM 10045 / NBRC 100440) (Methanococcus jannaschii).